Consider the following 183-residue polypeptide: Ribosome rescue factor SmrB (183 aa).

The Smr domain occupies 98-173 (LDLHGLTQLQ…GDAALLVLIE (76 aa)).

This sequence belongs to the SmrB family. Associates with collided ribosomes, but not with correctly translating polysomes.

Functionally, acts as a ribosome collision sensor. Detects stalled/collided disomes (pairs of ribosomes where the leading ribosome is stalled and a second ribosome has collided with it) and endonucleolytically cleaves mRNA at the 5' boundary of the stalled ribosome. Stalled/collided disomes form a new interface (primarily via the 30S subunits) that binds SmrB. Cleaved mRNA becomes available for tmRNA ligation, leading to ribosomal subunit dissociation and rescue of stalled ribosomes. This Salmonella paratyphi A (strain ATCC 9150 / SARB42) protein is Ribosome rescue factor SmrB.